Consider the following 647-residue polypeptide: Methyl-accepting chemotaxis protein McpK (647 aa).

The Cytoplasmic segment spans residues 1–16 (MYDWWVLQLAKLSVSR). A helical transmembrane segment spans residues 17-37 (KLMVGFGVLLALLLLVVISSN). The Periplasmic segment spans residues 38-291 (RTLTHQTALS…LRESTASRDR (254 aa)). Residues 45–287 (ALSEQLAEVA…AGRQLRESTA (243 aa)) enclose the HBM domain. A helical transmembrane segment spans residues 292–312 (ASLWLIAALALAFGCVAGWAI). Residues 313-647 (NRQIVRPLDE…LQAQVGRFRL (335 aa)) are Cytoplasmic-facing. Residues 314-370 (RQIVRPLDEALAQAEAIAAGDLGKRPQNPLTLQRRDELGQLQRVMQRMGDSLRELVG) enclose the HAMP domain. The 237-residue stretch at 375–611 (GVSQLASSAE…EINRSVLSVR (237 aa)) folds into the Methyl-accepting transducer domain.

The protein belongs to the methyl-accepting chemotaxis (MCP) protein family. In terms of assembly, ligand free ligand-binding domain (LBD) is present in a monomer-dimer equilibrium. AlphaKG binding stabilizes the homodimer.

The protein localises to the cell inner membrane. Its function is as follows. Chemotactic-signal transducers respond to changes in the concentration of attractants and repellents in the environment, transduce a signal from the outside to the inside of the cell, and facilitate sensory adaptation through the variation of the level of methylation. McpK is a chemoreceptor that specifically binds and mediates chemotaxis to alpha-ketoglutarate (alphaKG). The polypeptide is Methyl-accepting chemotaxis protein McpK (Pseudomonas aeruginosa (strain ATCC 15692 / DSM 22644 / CIP 104116 / JCM 14847 / LMG 12228 / 1C / PRS 101 / PAO1)).